A 136-amino-acid polypeptide reads, in one-letter code: Holo-[acyl-carrier-protein] synthase (136 aa).

2 residues coordinate Mg(2+): D8 and E57.

Belongs to the P-Pant transferase superfamily. AcpS family. Mg(2+) serves as cofactor.

It is found in the cytoplasm. It carries out the reaction apo-[ACP] + CoA = holo-[ACP] + adenosine 3',5'-bisphosphate + H(+). Transfers the 4'-phosphopantetheine moiety from coenzyme A to a Ser of acyl-carrier-protein. The polypeptide is Holo-[acyl-carrier-protein] synthase (Methylorubrum extorquens (strain CM4 / NCIMB 13688) (Methylobacterium extorquens)).